We begin with the raw amino-acid sequence, 24 residues long: Osteocalcin (24 aa).

The 24-residue stretch at 1–24 (REVCELNPDCDELADHIGFQEAYR) folds into the Gla domain. Ca(2+) is bound by residues glutamate 2, glutamate 5, and aspartate 11. A 4-carboxyglutamate mark is found at glutamate 2 and glutamate 5. Residues cysteine 4 and cysteine 10 are joined by a disulfide bond.

The protein belongs to the osteocalcin/matrix Gla protein family. Gamma-carboxyglutamate residues are formed by vitamin K dependent carboxylation by GGCX. These residues are essential for the binding of calcium. Decarboxylation promotes the hormone activity.

The protein localises to the secreted. The carboxylated form is one of the main organic components of the bone matrix, which constitutes 1-2% of the total bone protein: it acts as a negative regulator of bone formation and is required to limit bone formation without impairing bone resorption or mineralization. The carboxylated form binds strongly to apatite and calcium. Its function is as follows. The uncarboxylated form acts as a hormone secreted by osteoblasts, which regulates different cellular processes, such as energy metabolism, male fertility and brain development. Regulates of energy metabolism by acting as a hormone favoring pancreatic beta-cell proliferation, insulin secretion and sensitivity and energy expenditure. Uncarboxylated osteocalcin hormone also promotes testosterone production in the testes: acts as a ligand for G protein-coupled receptor GPRC6A at the surface of Leydig cells, initiating a signaling response that promotes the expression of enzymes required for testosterone synthesis in a CREB-dependent manner. Also acts as a regulator of brain development: osteocalcin hormone crosses the blood-brain barrier and acts as a ligand for GPR158 on neurons, initiating a signaling response that prevents neuronal apoptosis in the hippocampus, favors the synthesis of all monoamine neurotransmitters and inhibits that of gamma-aminobutyric acid (GABA). Osteocalcin also crosses the placenta during pregnancy and maternal osteocalcin is required for fetal brain development. In Homo sapiens neanderthalensis (Neanderthal), this protein is Osteocalcin.